Consider the following 522-residue polypeptide: Peptide chain release factor 3 (522 aa).

Residues 10–277 (ASRKTFAIIS…TFVDFAPSPS (268 aa)) form the tr-type G domain. GTP contacts are provided by residues 19-26 (SHPDAGKT), 87-91 (DTPGH), and 141-144 (NKMD).

The protein belongs to the TRAFAC class translation factor GTPase superfamily. Classic translation factor GTPase family. PrfC subfamily.

It is found in the cytoplasm. Increases the formation of ribosomal termination complexes and stimulates activities of RF-1 and RF-2. It binds guanine nucleotides and has strong preference for UGA stop codons. It may interact directly with the ribosome. The stimulation of RF-1 and RF-2 is significantly reduced by GTP and GDP, but not by GMP. The protein is Peptide chain release factor 3 of Listeria monocytogenes serotype 4b (strain CLIP80459).